We begin with the raw amino-acid sequence, 316 residues long: Cytochrome c biogenesis protein CcsA (316 aa).

A run of 8 helical transmembrane segments spans residues 9–29 (IFVN…LINL), 39–61 (FSKN…RYLQ), 70–90 (LYES…ILEV), 94–114 (IGLS…FATL), 143–163 (LISY…LSLF), 224–244 (TISL…VWAN), 257–271 (ETWA…AIYL), and 289–309 (SMGF…GVGL).

It belongs to the CcmF/CycK/Ccl1/NrfE/CcsA family. In terms of assembly, may interact with Ccs1.

The protein localises to the plastid. Its subcellular location is the chloroplast thylakoid membrane. In terms of biological role, required during biogenesis of c-type cytochromes (cytochrome c6 and cytochrome f) at the step of heme attachment. This Adiantum capillus-veneris (Maidenhair fern) protein is Cytochrome c biogenesis protein CcsA.